Reading from the N-terminus, the 179-residue chain is Shikimate kinase (179 aa).

15-20 contacts ATP; that stretch reads GAGKTS. Residue threonine 19 participates in Mg(2+) binding. Residues aspartate 37, arginine 61, and glycine 83 each coordinate substrate. Arginine 122 contributes to the ATP binding site. Arginine 142 is a substrate binding site.

Belongs to the shikimate kinase family. As to quaternary structure, monomer. Requires Mg(2+) as cofactor.

It is found in the cytoplasm. The catalysed reaction is shikimate + ATP = 3-phosphoshikimate + ADP + H(+). Its pathway is metabolic intermediate biosynthesis; chorismate biosynthesis; chorismate from D-erythrose 4-phosphate and phosphoenolpyruvate: step 5/7. Functionally, catalyzes the specific phosphorylation of the 3-hydroxyl group of shikimic acid using ATP as a cosubstrate. The protein is Shikimate kinase of Coxiella burnetii (strain RSA 331 / Henzerling II).